A 155-amino-acid polypeptide reads, in one-letter code: RNA pyrophosphohydrolase (155 aa).

The region spanning 5–147 (RYRPNVAAIV…KRPVYKKVLE (143 aa)) is the Nudix hydrolase domain. Positions 42-63 (GGIDKGESPKEALLRELKEEIG) match the Nudix box motif.

It belongs to the Nudix hydrolase family. RppH subfamily. A divalent metal cation is required as a cofactor.

Functionally, accelerates the degradation of transcripts by removing pyrophosphate from the 5'-end of triphosphorylated RNA, leading to a more labile monophosphorylated state that can stimulate subsequent ribonuclease cleavage. This is RNA pyrophosphohydrolase from Nitratiruptor sp. (strain SB155-2).